The following is a 282-amino-acid chain: Eukaryotic translation initiation factor 3 subunit G (282 aa).

The tract at residues 1 to 27 (MSSSKSLDWADDEDYGTGLPSIQTFDN) is disordered. 2 positions are modified to phosphoserine: S160 and S164. An RRM domain is found at 202-280 (ATLRVTNLSD…LILRCEFSKP (79 aa)).

This sequence belongs to the eIF-3 subunit G family. In terms of assembly, component of the eukaryotic translation initiation factor 3 (eIF-3) complex. The eIF-3 complex appears to include tif32/eif3a, SPAC25G10.08/eif3b, tif33/eif3c, SPBC4C3.07/eif3f, tif35/eif3g and sum1/eif3i. This set of common subunits may also associate exclusively with either moe1/eif3d and int6/eif3e, or with SPAC821.05/eif3h and SPAC1751.03/eif3m. The eIF-3 complex may also include SPAC3A12.13c/eif3j.

The protein localises to the cytoplasm. Functionally, RNA-binding component of the eukaryotic translation initiation factor 3 (eIF-3) complex, which is involved in protein synthesis of a specialized repertoire of mRNAs and, together with other initiation factors, stimulates binding of mRNA and methionyl-tRNAi to the 40S ribosome. The eIF-3 complex specifically targets and initiates translation of a subset of mRNAs involved in cell proliferation. This subunit can bind 18S rRNA. The sequence is that of Eukaryotic translation initiation factor 3 subunit G (tif35) from Schizosaccharomyces pombe (strain 972 / ATCC 24843) (Fission yeast).